The chain runs to 25 residues: Cysteine-rich venom protein 25 (25 aa).

The interval 1 to 25 (NVDFNSESTRRKKKQKEIVDLXNSL) is disordered.

The protein belongs to the CRISP family. In terms of processing, contains 8 disulfide bonds. In terms of tissue distribution, expressed by the venom gland.

The protein resides in the secreted. This chain is Cysteine-rich venom protein 25, found in Naja haje haje (Egyptian cobra).